A 644-amino-acid polypeptide reads, in one-letter code: Protein cueball (644 aa).

The first 26 residues, 1-26 (MIRIRFGMDVLLVLLLATCLLSPAHG), serve as a signal peptide directing secretion. Residues 27–531 (TPLEWDFAVT…VCLTPKVWTS (505 aa)) are Extracellular-facing. 2 N-linked (GlcNAc...) asparagine glycosylation sites follow: asparagine 82 and asparagine 108. 3 LDL-receptor class B repeats span residues 121-166 (MNLF…DVCR), 167-211 (RKLY…DQLS), and 212-257 (DRLF…TNDA). N-linked (GlcNAc...) asparagine glycosylation is found at asparagine 175, asparagine 190, and asparagine 196. The N-linked (GlcNAc...) asparagine glycan is linked to asparagine 313. 2 consecutive EGF-like domains span residues 398-430 (EIRECHNYCVHGTCQMSESAYPKCYCQPGFTGE) and 433-471 (EVSVCAGLCLNGGHCRASKDEKEAPSCECPAKFGGARCE). Disulfide bonds link cysteine 402-cysteine 411, cysteine 406-cysteine 421, cysteine 437-cysteine 447, cysteine 441-cysteine 459, and cysteine 461-cysteine 470. N-linked (GlcNAc...) asparagine glycans are attached at residues asparagine 473 and asparagine 508. Residues 532 to 552 (SVIIILVIGIVSSLLLVAVIV) traverse the membrane as a helical segment. Topologically, residues 553-644 (HGIRRLYKPK…LIHNMEDDLY (92 aa)) are cytoplasmic.

Belongs to the cueball family.

The protein localises to the cell membrane. In terms of biological role, has a role in spermatogenesis and oogenesis. This chain is Protein cueball, found in Drosophila erecta (Fruit fly).